The primary structure comprises 178 residues: Protein GrpE (178 aa).

A compositionally biased stretch (basic and acidic residues) spans 1-11; that stretch reads MADELSEKSVE. Residues 1 to 32 are disordered; sequence MADELSEKSVEGTEEDGESAPAEGTTEGVPVD.

Belongs to the GrpE family. As to quaternary structure, homodimer.

It localises to the cytoplasm. Participates actively in the response to hyperosmotic and heat shock by preventing the aggregation of stress-denatured proteins, in association with DnaK and GrpE. It is the nucleotide exchange factor for DnaK and may function as a thermosensor. Unfolded proteins bind initially to DnaJ; upon interaction with the DnaJ-bound protein, DnaK hydrolyzes its bound ATP, resulting in the formation of a stable complex. GrpE releases ADP from DnaK; ATP binding to DnaK triggers the release of the substrate protein, thus completing the reaction cycle. Several rounds of ATP-dependent interactions between DnaJ, DnaK and GrpE are required for fully efficient folding. This chain is Protein GrpE, found in Methanothrix thermoacetophila (strain DSM 6194 / JCM 14653 / NBRC 101360 / PT) (Methanosaeta thermophila).